We begin with the raw amino-acid sequence, 441 residues long: ATP-dependent RNA helicase sub2 (441 aa).

Residues 19–29 show a composition bias toward low complexity; sequence DAAATTAAPAA. Positions 19 to 43 are disordered; it reads DAAATTAAPAANGAQDKKGDLTVSG. The short motif at 58–86 is the Q motif element; the sequence is TGFRDFLLKGELLRAITDCGFEHPSEVQQ. The region spanning 89 to 264 is the Helicase ATP-binding domain; that stretch reads IPTAILNVDV…KKFMRNPLEV (176 aa). 102–109 contacts ATP; sequence AKSGLGKT. Residues 211–214 carry the DEAD box motif; sequence DECD. In terms of domain architecture, Helicase C-terminal spans 276 to 437; it reads GLQQYYIKLS…EYPEGGVDSS (162 aa).

This sequence belongs to the DEAD box helicase family. DECD subfamily.

It is found in the nucleus. It carries out the reaction ATP + H2O = ADP + phosphate + H(+). In terms of biological role, ATP-binding RNA helicase involved in transcription elongation and required for the export of mRNA out of the nucleus. SUB2 also plays a role in pre-mRNA splicing and spliceosome assembly. May be involved in rDNA and telomeric silencing, and maintenance of genome integrity. In Aspergillus clavatus (strain ATCC 1007 / CBS 513.65 / DSM 816 / NCTC 3887 / NRRL 1 / QM 1276 / 107), this protein is ATP-dependent RNA helicase sub2 (sub2).